Consider the following 2294-residue polypeptide: Reducing polyketide synthase BOA9 (2294 aa).

The region spanning 4–409 (PEPVAIIGMG…GANATAIVEA (406 aa)) is the Ketosynthase family 3 (KS3) domain. A malonyl-CoA:ACP transacylase (MAT) domain region spans residues 537–853 (IFTGQGAQNA…DYAATLVRGQ (317 aa)). Ser630 functions as the For malonyltransferase activity in the catalytic mechanism. Residues 930-1067 (HDLLGAILPG…GTVTKKKAVT (138 aa)) form an N-terminal hotdog fold region. The tract at residues 930-1104 (HDLLGAILPG…LNYGPAFNGL (175 aa)) is dehydratase (DH) domain. Positions 930–1236 (HDLLGAILPG…CTQYSEALDD (307 aa)) constitute a PKS/mFAS DH domain. Catalysis depends on His962, which acts as the Proton acceptor; for dehydratase activity. The tract at residues 1078–1236 (QEPKAARTWY…CTQYSEALDD (159 aa)) is C-terminal hotdog fold. The active-site Proton donor; for dehydratase activity is the Asp1142. Residues 1618-1908 (GIFDTIHFKD…KNSRIGRVVV (291 aa)) are enoyl reductase (ER) domain. The ketoreductase (KR) domain stretch occupies residues 1934-2107 (VHTYLLGVLE…LPATTISLTV (174 aa)). Positions 2214–2292 (LLLPDILEMI…SLAKKIYDIR (79 aa)) constitute a Carrier domain. Ser2251 is modified (O-(pantetheine 4'-phosphoryl)serine).

It functions in the pathway polyketide biosynthesis. In terms of biological role, reducing polyketide synthase; part of the gene cluster B that mediates the biosynthesis of botcinic acid and its botcinin derivatives, acetate-derived polyketides that contribute to virulence when combined with the sesquiterpene botrydial. Botcinic acid and its derivatives have been shown to induce chlorosis and necrosis during host plant infection, but also have antifungal activities. Two polyketide synthases, BOA6 and BOA9, are involved in the biosynthesis of botcinins. BOA6 mediates the formation of the per-methylated tetraketide core by condensation of four units of malonyl-CoA with one unit of acetyl-CoA, which would be methylated in activated methylene groups to yield a bicyclic acid intermediate that could then either be converted to botrylactone derivatives or lose the starter acetate unit through a retro-Claisen type C-C bond cleavage to yield botcinin derivatives. The second polyketide synthase, BOA9, is probably required for the biosynthesis of the tetraketide side chain of botcinins. The methyltransferase (MT) domain within BOA6 is probably responsible for the incorporation of four methyl groups. The trans-enoyl reductase BOA5 might take over the enoyl reductase function of BOA6 that misses an ER domain. The monooxygenases BOA2, BOA3 and BOA4 might be involved in further hydroxylations at C4, C5 and C8, whereas BOA7, close to BOA9, could potentially be involved in the hydroxylation at C4 in the side chain of botcinins. The sequence is that of Reducing polyketide synthase BOA9 from Botryotinia fuckeliana (strain B05.10) (Noble rot fungus).